Reading from the N-terminus, the 105-residue chain is Small ribosomal subunit protein uS10c (105 aa).

It belongs to the universal ribosomal protein uS10 family. Part of the 30S ribosomal subunit.

The protein resides in the plastid. Its subcellular location is the cyanelle. In terms of biological role, involved in the binding of tRNA to the ribosomes. This is Small ribosomal subunit protein uS10c (rps10) from Cyanophora paradoxa.